The following is a 499-amino-acid chain: Glutamyl-tRNA(Gln) amidotransferase subunit A (499 aa).

Catalysis depends on charge relay system residues Lys80 and Ser155. The Acyl-ester intermediate role is filled by Ser179.

It belongs to the amidase family. GatA subfamily. As to quaternary structure, heterotrimer of A, B and C subunits.

The catalysed reaction is L-glutamyl-tRNA(Gln) + L-glutamine + ATP + H2O = L-glutaminyl-tRNA(Gln) + L-glutamate + ADP + phosphate + H(+). In terms of biological role, allows the formation of correctly charged Gln-tRNA(Gln) through the transamidation of misacylated Glu-tRNA(Gln) in organisms which lack glutaminyl-tRNA synthetase. The reaction takes place in the presence of glutamine and ATP through an activated gamma-phospho-Glu-tRNA(Gln). The protein is Glutamyl-tRNA(Gln) amidotransferase subunit A of Cupriavidus metallidurans (strain ATCC 43123 / DSM 2839 / NBRC 102507 / CH34) (Ralstonia metallidurans).